Reading from the N-terminus, the 311-residue chain is Ribonuclease HIII (311 aa).

An RNase H type-2 domain is found at 95-311 (MSIVGSDEVG…NTEKAFRLLK (217 aa)). Residues Asp-101, Glu-102, and Asp-206 each coordinate a divalent metal cation.

Belongs to the RNase HII family. RnhC subfamily. It depends on Mn(2+) as a cofactor. Requires Mg(2+) as cofactor.

The protein resides in the cytoplasm. It catalyses the reaction Endonucleolytic cleavage to 5'-phosphomonoester.. Endonuclease that specifically degrades the RNA of RNA-DNA hybrids. The sequence is that of Ribonuclease HIII from Bacillus thuringiensis subsp. konkukian (strain 97-27).